We begin with the raw amino-acid sequence, 613 residues long: Dihydroxy-acid dehydratase (613 aa).

Aspartate 81 serves as a coordination point for Mg(2+). Residue cysteine 122 coordinates [2Fe-2S] cluster. Mg(2+) is bound by residues aspartate 123 and lysine 124. At lysine 124 the chain carries N6-carboxylysine. Cysteine 195 provides a ligand contact to [2Fe-2S] cluster. A Mg(2+)-binding site is contributed by glutamate 491. Serine 517 functions as the Proton acceptor in the catalytic mechanism.

It belongs to the IlvD/Edd family. As to quaternary structure, homodimer. [2Fe-2S] cluster is required as a cofactor. Requires Mg(2+) as cofactor.

The catalysed reaction is (2R)-2,3-dihydroxy-3-methylbutanoate = 3-methyl-2-oxobutanoate + H2O. The enzyme catalyses (2R,3R)-2,3-dihydroxy-3-methylpentanoate = (S)-3-methyl-2-oxopentanoate + H2O. The protein operates within amino-acid biosynthesis; L-isoleucine biosynthesis; L-isoleucine from 2-oxobutanoate: step 3/4. It participates in amino-acid biosynthesis; L-valine biosynthesis; L-valine from pyruvate: step 3/4. Its function is as follows. Functions in the biosynthesis of branched-chain amino acids. Catalyzes the dehydration of (2R,3R)-2,3-dihydroxy-3-methylpentanoate (2,3-dihydroxy-3-methylvalerate) into 2-oxo-3-methylpentanoate (2-oxo-3-methylvalerate) and of (2R)-2,3-dihydroxy-3-methylbutanoate (2,3-dihydroxyisovalerate) into 2-oxo-3-methylbutanoate (2-oxoisovalerate), the penultimate precursor to L-isoleucine and L-valine, respectively. In Vibrio atlanticus (strain LGP32) (Vibrio splendidus (strain Mel32)), this protein is Dihydroxy-acid dehydratase.